We begin with the raw amino-acid sequence, 171 residues long: MQKQNSFTFEELLSCGRGEMFGEGNAQLPLPPMLMFDRIVSITEEGGQYGNGQIVAELDVRPDLWFFNCHFAGDPVMPGCLGLDAMWQLVGFYLGWMGGKGRGRALGAGDVKFTGQVLPTGKLITYRIDLKRVIMRKLVMGIADAHMEIDGREIYVASDLRVGLFTRTDNF.

His-70 is a catalytic residue.

The protein belongs to the thioester dehydratase family. FabA subfamily. As to quaternary structure, homodimer.

The protein localises to the cytoplasm. It catalyses the reaction a (3R)-hydroxyacyl-[ACP] = a (2E)-enoyl-[ACP] + H2O. The enzyme catalyses (3R)-hydroxydecanoyl-[ACP] = (2E)-decenoyl-[ACP] + H2O. The catalysed reaction is (2E)-decenoyl-[ACP] = (3Z)-decenoyl-[ACP]. Its pathway is lipid metabolism; fatty acid biosynthesis. Necessary for the introduction of cis unsaturation into fatty acids. Catalyzes the dehydration of (3R)-3-hydroxydecanoyl-ACP to E-(2)-decenoyl-ACP and then its isomerization to Z-(3)-decenoyl-ACP. Can catalyze the dehydratase reaction for beta-hydroxyacyl-ACPs with saturated chain lengths up to 16:0, being most active on intermediate chain length. The polypeptide is 3-hydroxydecanoyl-[acyl-carrier-protein] dehydratase (Methylobacillus flagellatus (strain ATCC 51484 / DSM 6875 / VKM B-1610 / KT)).